A 383-amino-acid polypeptide reads, in one-letter code: 8-amino-7-oxononanoate synthase (383 aa).

Arginine 21 contacts substrate. 108–109 (GY) contacts pyridoxal 5'-phosphate. Histidine 133 lines the substrate pocket. Serine 179, histidine 207, and threonine 233 together coordinate pyridoxal 5'-phosphate. Lysine 236 carries the post-translational modification N6-(pyridoxal phosphate)lysine. Residue threonine 350 participates in substrate binding.

The protein belongs to the class-II pyridoxal-phosphate-dependent aminotransferase family. BioF subfamily. Homodimer. The cofactor is pyridoxal 5'-phosphate.

The catalysed reaction is 6-carboxyhexanoyl-[ACP] + L-alanine + H(+) = (8S)-8-amino-7-oxononanoate + holo-[ACP] + CO2. It participates in cofactor biosynthesis; biotin biosynthesis. In terms of biological role, catalyzes the decarboxylative condensation of pimeloyl-[acyl-carrier protein] and L-alanine to produce 8-amino-7-oxononanoate (AON), [acyl-carrier protein], and carbon dioxide. The protein is 8-amino-7-oxononanoate synthase of Photorhabdus laumondii subsp. laumondii (strain DSM 15139 / CIP 105565 / TT01) (Photorhabdus luminescens subsp. laumondii).